The primary structure comprises 89 residues: DNA-directed RNA polymerase subunit Rpo6 (89 aa).

Belongs to the archaeal Rpo6/eukaryotic RPB6 RNA polymerase subunit family. In terms of assembly, part of the 13-subunit RNA polymerase complex.

Its subcellular location is the cytoplasm. It catalyses the reaction RNA(n) + a ribonucleoside 5'-triphosphate = RNA(n+1) + diphosphate. Functionally, DNA-dependent RNA polymerase (RNAP) catalyzes the transcription of DNA into RNA using the four ribonucleoside triphosphates as substrates. Reconstitution experiments show this subunit is required for basic activity. This Sulfolobus acidocaldarius (strain ATCC 33909 / DSM 639 / JCM 8929 / NBRC 15157 / NCIMB 11770) protein is DNA-directed RNA polymerase subunit Rpo6.